We begin with the raw amino-acid sequence, 668 residues long: MWHEARKHERKLRGMMVDYKKRAERRREYYEKIKKDPAQFLQVHGRACKVHLDSAVALAAESPVNMMPWQGDTNNMIDRFDVRAHLDHIPDYTPPLLTTISPEQESDERKCNYERYRGLVQNDFAGISEEQCLYQIYIDELYGGLQRPSEDEKKKLAEKKASIGYTYEDSTVAEVEKVAEKPEEEESPAEEESNSDEDEVIPDIDVEVDVDELNQEQVADLNKQATTYGMADGDFVRMLRKDKEEAEAIKHAKALEEEKAMYSGRRSRRQRREFREKRLRGRKISPPSYARRDSPTYDPYKRSPSESSSESRSRSRSPSPGREEKITFITSFGGSDEEAAAAAAAAAASGAAPGKPPAPPQPGGPAPGRNASARRRSSSSSASRTSSSRSSSRSSSRSRRGYYRSGRHARSRSRSWSRSRSRSRRYSRSRSRGRRHSDGGSRDGHRYSRSPARRSGYAPRRRSRSRSRSGDRYKRGARGPRHHSSSHSRSSWSLSPSRSRSLTRSGSRSQSRSRSRSQSHSQSQSHSPSPPREKLTRPAASPAVGEKLKKTEPAAGKETGAAKPKLTPQERLKLRMQKALNRQFKADKKAAQEKMIQQEHERQEREDELRAMARKIRMKERERREKEREEWERQYSRQSRSPSPRYSREYSSSRRRSRSRSRSPHYRH.

At S101 the chain carries Phosphoserine. Disordered regions lie at residues 173 to 232 and 252 to 668; these read AEVE…GMAD and AKAL…HYRH. The segment covering 182–214 has biased composition (acidic residues); it reads PEEEESPAEEESNSDEDEVIPDIDVEVDVDELN. Residues 265 to 283 are compositionally biased toward basic residues; the sequence is RRSRRQRREFREKRLRGRK. S285 and S294 each carry phosphoserine. Basic and acidic residues predominate over residues 290–313; it reads ARRDSPTYDPYKRSPSESSSESRS. T327 bears the Phosphothreonine mark. A phosphoserine mark is found at S331 and S335. A compositionally biased stretch (low complexity) spans 340-353; that stretch reads AAAAAAAAASGAAP. Positions 354-365 are enriched in pro residues; sequence GKPPAPPQPGGP. The segment covering 378–395 has biased composition (low complexity); that stretch reads SSSSASRTSSSRSSSRSS. Basic residues predominate over residues 396–435; the sequence is SRSRRGYYRSGRHARSRSRSWSRSRSRSRRYSRSRSRGRR. The segment covering 436-446 has biased composition (basic and acidic residues); it reads HSDGGSRDGHR. Residues 475-486 are compositionally biased toward basic residues; it reads RGARGPRHHSSS. Composition is skewed to low complexity over residues 487–510 and 518–527; these read HSRS…SRSQ and QSHSQSQSHS. Phosphoserine is present on S541. Phosphothreonine is present on T567. Residues 579–641 adopt a coiled-coil conformation; it reads ALNRQFKADK…ERQYSRQSRS (63 aa). Basic and acidic residues-rich tracts occupy residues 584–611 and 619–635; these read FKAD…ELRA and KERE…ERQY. Residues 636–645 show a composition bias toward low complexity; that stretch reads SRQSRSPSPR. Residues 653 to 668 are compositionally biased toward basic residues; the sequence is SRRRSRSRSRSPHYRH.

This sequence belongs to the splicing factor SR family. In terms of assembly, probably interacts with CLK4. In terms of processing, phosphorylated in vitro by CLK4.

It is found in the nucleus. Its function is as follows. Probably functions as an alternative splicing regulator. May regulate the mRNA splicing of genes such as CLK1. May act by regulating members of the CLK kinase family. This chain is CLK4-associating serine/arginine rich protein (Clasrp), found in Rattus norvegicus (Rat).